A 238-amino-acid polypeptide reads, in one-letter code: Protein shisa-3 homolog (238 aa).

A signal peptide spans 1-21 (MRALLALCLLLGWLRWGPAGA). The Lumenal portion of the chain corresponds to 22–98 (QQSGEYCHGW…GITAQPVYVP (77 aa)). The helical transmembrane segment at 99 to 119 (FLIVGSIFIAFIILGSVVAIY) threads the bilayer. Residues 120-238 (CCTCLRPKEP…GKSCPDFSSS (119 aa)) are Cytoplasmic-facing. Residues 151–173 (TSTSPRAPSRQSSTATSSSSTGG) form a disordered region. A compositionally biased stretch (low complexity) spans 159-173 (SRQSSTATSSSSTGG).

It belongs to the shisa family.

The protein localises to the endoplasmic reticulum membrane. In terms of biological role, plays an essential role in the maturation of presomitic mesoderm cells by individual attenuation of both FGF and WNT signaling. The polypeptide is Protein shisa-3 homolog (SHISA3) (Homo sapiens (Human)).